We begin with the raw amino-acid sequence, 153 residues long: Cytochrome c-type biogenesis protein CcmE (153 aa).

At 1 to 8 the chain is on the cytoplasmic side; it reads MTPVQRRR. The helical; Signal-anchor for type II membrane protein transmembrane segment at 9–29 threads the bilayer; the sequence is LVWVLLALLASGLATALVAMA. Topologically, residues 30–153 are periplasmic; that stretch reads LERNIAYLYT…DVPVTAPEVR (124 aa). Heme contacts are provided by His123 and Tyr127.

The protein belongs to the CcmE/CycJ family.

It is found in the cell inner membrane. Its function is as follows. Heme chaperone required for the biogenesis of c-type cytochromes. Transiently binds heme delivered by CcmC and transfers the heme to apo-cytochromes in a process facilitated by CcmF and CcmH. This Stenotrophomonas maltophilia (strain R551-3) protein is Cytochrome c-type biogenesis protein CcmE.